Here is a 282-residue protein sequence, read N- to C-terminus: Undecaprenyl-diphosphatase (282 aa).

5 helical membrane-spanning segments follow: residues tryptophan 96 to isoleucine 116, methionine 123 to tryptophan 143, phenylalanine 198 to alanine 218, glutamine 229 to leucine 249, and phenylalanine 260 to leucine 280.

It belongs to the UppP family.

It is found in the cell membrane. The enzyme catalyses di-trans,octa-cis-undecaprenyl diphosphate + H2O = di-trans,octa-cis-undecaprenyl phosphate + phosphate + H(+). Its function is as follows. Catalyzes the dephosphorylation of undecaprenyl diphosphate (UPP). Confers resistance to bacitracin. This Corynebacterium diphtheriae (strain ATCC 700971 / NCTC 13129 / Biotype gravis) protein is Undecaprenyl-diphosphatase.